Reading from the N-terminus, the 371-residue chain is D-alanine--D-alanine ligase (371 aa).

An ATP-grasp domain is found at 154–361 (KKLLVAEGLP…YPTLLAAMVD (208 aa)). 182–237 (RERLGLPVFVKPARGGSSIGVSRVSDWAELPAAIEAARRHDPKVIVEAGIAGRELE) is a binding site for ATP. Mg(2+) contacts are provided by aspartate 316, glutamate 328, and asparagine 330.

Belongs to the D-alanine--D-alanine ligase family. It depends on Mg(2+) as a cofactor. The cofactor is Mn(2+).

The protein localises to the cytoplasm. The catalysed reaction is 2 D-alanine + ATP = D-alanyl-D-alanine + ADP + phosphate + H(+). Its pathway is cell wall biogenesis; peptidoglycan biosynthesis. Its function is as follows. Cell wall formation. This chain is D-alanine--D-alanine ligase, found in Mycobacterium sp. (strain KMS).